The sequence spans 557 residues: Dihydroxy-acid dehydratase (557 aa).

A [2Fe-2S] cluster-binding site is contributed by cysteine 50. Aspartate 82 serves as a coordination point for Mg(2+). A [2Fe-2S] cluster-binding site is contributed by cysteine 123. Mg(2+) contacts are provided by aspartate 124 and lysine 125. At lysine 125 the chain carries N6-carboxylysine. Cysteine 195 contributes to the [2Fe-2S] cluster binding site. Glutamate 447 contacts Mg(2+). Serine 473 functions as the Proton acceptor in the catalytic mechanism.

Belongs to the IlvD/Edd family. As to quaternary structure, homodimer. [2Fe-2S] cluster is required as a cofactor. The cofactor is Mg(2+).

The enzyme catalyses (2R)-2,3-dihydroxy-3-methylbutanoate = 3-methyl-2-oxobutanoate + H2O. It catalyses the reaction (2R,3R)-2,3-dihydroxy-3-methylpentanoate = (S)-3-methyl-2-oxopentanoate + H2O. It functions in the pathway amino-acid biosynthesis; L-isoleucine biosynthesis; L-isoleucine from 2-oxobutanoate: step 3/4. The protein operates within amino-acid biosynthesis; L-valine biosynthesis; L-valine from pyruvate: step 3/4. In terms of biological role, functions in the biosynthesis of branched-chain amino acids. Catalyzes the dehydration of (2R,3R)-2,3-dihydroxy-3-methylpentanoate (2,3-dihydroxy-3-methylvalerate) into 2-oxo-3-methylpentanoate (2-oxo-3-methylvalerate) and of (2R)-2,3-dihydroxy-3-methylbutanoate (2,3-dihydroxyisovalerate) into 2-oxo-3-methylbutanoate (2-oxoisovalerate), the penultimate precursor to L-isoleucine and L-valine, respectively. The polypeptide is Dihydroxy-acid dehydratase (Ralstonia nicotianae (strain ATCC BAA-1114 / GMI1000) (Ralstonia solanacearum)).